Reading from the N-terminus, the 260-residue chain is Carbonic anhydrase 3 (260 aa).

Ala2 bears the N-acetylalanine mark. Residues 3 to 259 (KEWGYASHNG…VKGRVVRASF (257 aa)) enclose the Alpha-carbonic anhydrase domain. Phosphoserine is present on residues Ser29, Ser43, Ser48, Ser50, and Ser55. The segment at 64–67 (KTCR) is involved in proton transfer. Thr73 carries the phosphothreonine modification. His94, His96, and His119 together coordinate Zn(2+). Residue Tyr127 is modified to Phosphotyrosine. Phosphothreonine occurs at positions 129 and 176. Residues Cys182 and Cys187 each carry the S-glutathionyl cysteine modification. 198 to 199 (TT) lines the substrate pocket. The residue at position 216 (Thr216) is a Phosphothreonine. Position 219 is a phosphoserine (Ser219).

The protein belongs to the alpha-carbonic anhydrase family. Zn(2+) is required as a cofactor. Post-translationally, S-thiolated both by thiol-disulfide exchange with glutathione disulfide and by oxyradical-initiated S-thiolation with reduced glutathione. S-glutathionylated in hepatocytes under oxidative stress. Expressed at lower levels in adipose tissue from animals that were either genetically obese or had experimentally induced obesity.

It is found in the cytoplasm. The catalysed reaction is hydrogencarbonate + H(+) = CO2 + H2O. With respect to regulation, inhibited by acetazolamide. Its function is as follows. Reversible hydration of carbon dioxide. The chain is Carbonic anhydrase 3 from Mus musculus (Mouse).